The following is a 99-amino-acid chain: MALTKAEMAEHLFETLGINKRVAKEMVESFFEEIREALESGEQVKLSGFGNFDLRDKNQRPGRNPKTGEDIPISARRVVTFRPGQKLKSRVEAANSGKK.

A disordered region spans residues 49 to 71 (FGNFDLRDKNQRPGRNPKTGEDI).

This sequence belongs to the bacterial histone-like protein family. As to quaternary structure, heterodimer of an alpha and a beta chain.

In terms of biological role, this protein is one of the two subunits of integration host factor, a specific DNA-binding protein that functions in genetic recombination as well as in transcriptional and translational control. The sequence is that of Integration host factor subunit alpha from Shewanella frigidimarina (strain NCIMB 400).